Here is a 314-residue protein sequence, read N- to C-terminus: DNA-directed RNA polymerase subunit alpha (314 aa).

Positions Met1–Thr228 are alpha N-terminal domain (alpha-NTD). The segment at Glu246 to Asp314 is alpha C-terminal domain (alpha-CTD).

The protein belongs to the RNA polymerase alpha chain family. As to quaternary structure, homodimer. The RNAP catalytic core consists of 2 alpha, 1 beta, 1 beta' and 1 omega subunit. When a sigma factor is associated with the core the holoenzyme is formed, which can initiate transcription.

It catalyses the reaction RNA(n) + a ribonucleoside 5'-triphosphate = RNA(n+1) + diphosphate. DNA-dependent RNA polymerase catalyzes the transcription of DNA into RNA using the four ribonucleoside triphosphates as substrates. This chain is DNA-directed RNA polymerase subunit alpha, found in Bacillus cytotoxicus (strain DSM 22905 / CIP 110041 / 391-98 / NVH 391-98).